We begin with the raw amino-acid sequence, 352 residues long: Peptide chain release factor 1 (352 aa).

Q233 carries the post-translational modification N5-methylglutamine. Residues 288 to 309 (NAKDRKEQVGSGDRSERIRTYN) form a disordered region. Basic and acidic residues predominate over residues 289–306 (AKDRKEQVGSGDRSERIR).

It belongs to the prokaryotic/mitochondrial release factor family. Post-translationally, methylated by PrmC. Methylation increases the termination efficiency of RF1.

It is found in the cytoplasm. Functionally, peptide chain release factor 1 directs the termination of translation in response to the peptide chain termination codons UAG and UAA. The sequence is that of Peptide chain release factor 1 from Helicobacter acinonychis (strain Sheeba).